We begin with the raw amino-acid sequence, 312 residues long: Pyridoxal kinase (312 aa).

Position 1 is an N-acetylmethionine (Met-1). 2 residues coordinate pyridoxal: Ser-12 and Thr-47. Thr-47 is a pyridoxal 5'-phosphate binding site. Ser-59 carries the phosphoserine modification. Residue Asp-113 coordinates ATP. Residue Asp-113 coordinates Na(+). Asp-118 lines the Mg(2+) pocket. Thr-148 is a Na(+) binding site. 150-153 (NQFE) contacts ATP. Ser-164 carries the post-translational modification Phosphoserine. Thr-186 is a binding site for Na(+). 186-187 (TS) provides a ligand contact to ATP. Ser-213 carries the post-translational modification Phosphoserine. ATP is bound by residues 226–228 (VEA) and Thr-233. Pyridoxal 5'-phosphate is bound at residue 234–235 (GD). Asp-235 (proton acceptor) is an active-site residue. Ser-285 carries the post-translational modification Phosphoserine.

Belongs to the pyridoxine kinase family. In terms of assembly, homodimer. Zn(2+) serves as cofactor. The cofactor is Mg(2+).

It is found in the cytoplasm. The protein localises to the cytosol. The catalysed reaction is pyridoxal + ATP = pyridoxal 5'-phosphate + ADP + H(+). It carries out the reaction pyridoxamine + ATP = pyridoxamine 5'-phosphate + ADP + H(+). The enzyme catalyses pyridoxine + ATP = pyridoxine 5'-phosphate + ADP + H(+). It functions in the pathway cofactor metabolism; pyridoxal 5'-phosphate salvage; pyridoxal 5'-phosphate from pyridoxal: step 1/1. The protein operates within cofactor metabolism; pyridoxal 5'-phosphate salvage; pyridoxine 5'-phosphate from pyridoxine: step 1/1. Its pathway is cofactor metabolism; pyridoxal 5'-phosphate salvage; pyridoxamine 5'-phosphate from pyridoxamine: step 1/1. Activity is increased in the presence of K(+)or Na(+). Functionally, catalyzes the phosphorylation of the dietary vitamin B6 vitamers pyridoxal (PL), pyridoxine (PN) and pyridoxamine (PM) to form pyridoxal 5'-phosphate (PLP), pyridoxine 5'-phosphate (PNP) and pyridoxamine 5'-phosphate (PMP), respectively. PLP is the active form of vitamin B6, and acts as a cofactor for over 140 different enzymatic reactions. The chain is Pyridoxal kinase from Mus musculus (Mouse).